The chain runs to 195 residues: MARNRQPVLKKCRALGIDPVILGVKKSSNRQIRPNANKKPTEYATQLREKQKAKFIYNVMEKQFRKIYEEAARKLGVTGLTLIEYLERRLENVVYRLGFAKTRRQARQIVSHGHIAVNGRRVNIASFRVKVGDIVSVIENSKNVELIKLAVEDATPPAWLELDRAAFSGKVLQNPTKDDLDFDLNESLIVEFYSR.

The S4 RNA-binding domain occupies 88 to 150 (RRLENVVYRL…SKNVELIKLA (63 aa)).

The protein belongs to the universal ribosomal protein uS4 family. As to quaternary structure, part of the 30S ribosomal subunit. Contacts protein S5. The interaction surface between S4 and S5 is involved in control of translational fidelity.

One of the primary rRNA binding proteins, it binds directly to 16S rRNA where it nucleates assembly of the body of the 30S subunit. In terms of biological role, with S5 and S12 plays an important role in translational accuracy. In Fusobacterium nucleatum subsp. nucleatum (strain ATCC 25586 / DSM 15643 / BCRC 10681 / CIP 101130 / JCM 8532 / KCTC 2640 / LMG 13131 / VPI 4355), this protein is Small ribosomal subunit protein uS4.